Consider the following 274-residue polypeptide: MWPLCFLLNKLLRVEERNQGILDGNGDSTFPKYCLFDDPLVSDGKYRDAGLPSSSHMDVPHVHQLASWDCGLACVLMVLRASGIASCTLEDLAEICSTNSIWTVDLAYLLQKFCVEFSYYTITFGANPNYSIEEFYKEQLPEDLVRVDLLFRKAHESGIIIQCRSVSIHEISCLLLSGNYIAIALVDQDKLSKSWLEEVLVSGLHSSNSCYTGHYVVICGYDAVRDEFEIRDPASSKIHERISSKCLENARKSFGTDEDLLLINLENMRNQNGY.

Functions both as monomer and homooligomer. The cofactor is Mg(2+).

It catalyses the reaction GTP = 3',5'-cyclic GMP + diphosphate. It participates in nucleotide metabolism. Its function is as follows. Magnesium-dependent guanylyl cyclase that catalyzes the formation of guanosine 3',5'-cyclic monophosphate (cGMP) from guanosine 5'-triphosphate (GTP). Can also use ATP as substrate with a low activity. In Arabidopsis thaliana (Mouse-ear cress), this protein is Guanylyl cyclase 1.